The chain runs to 96 residues: Muconolactone Delta-isomerase (96 aa).

Belongs to the muconolactone Delta-isomerase family. As to quaternary structure, homodecamer.

The catalysed reaction is (S)-muconolactone = (4,5-dihydro-5-oxofuran-2-yl)-acetate. The protein operates within aromatic compound metabolism; beta-ketoadipate pathway; 5-oxo-4,5-dihydro-2-furylacetate from catechol: step 3/3. The sequence is that of Muconolactone Delta-isomerase (catC) from Pseudomonas putida (Arthrobacter siderocapsulatus).